Reading from the N-terminus, the 286-residue chain is MITSKNEAAYLDLIRYVRDHGTEKGDRTGTGTRSHFGAQLRFDLKDGFPLLTTKKVHMKSITYELFWFLKGDTHVKYLQDHGVRIWNEWSTAEQTARFGRPEGELGPIYGHQWRNYGATKAEDGRYNQDGVDQVVEVIEQIKSNPNSRRLIVSGWNPAEATQVALPPCHTLFQFFVADGKLSCQLYQRSADLFLGVPFNIASYSLLTHMIAQVCDLEVGEFIWTGGDCHLYQNHIDQVNEQLSREAYELPKLWLNPEIKDIFDFTFDDIRVEGYQSHPAIKAPVAV.

Arg27 is a dUMP binding site. His57 contributes to the (6R)-5,10-methylene-5,6,7,8-tetrahydrofolate binding site. Residue 148-149 participates in dUMP binding; it reads RR. Cys168 (nucleophile) is an active-site residue. DUMP-binding positions include 188-191, Asn199, and 229-231; these read RSAD and HLY. Asp191 is a binding site for (6R)-5,10-methylene-5,6,7,8-tetrahydrofolate. Residue Ala285 participates in (6R)-5,10-methylene-5,6,7,8-tetrahydrofolate binding.

Belongs to the thymidylate synthase family. Bacterial-type ThyA subfamily. In terms of assembly, homodimer.

The protein localises to the cytoplasm. The catalysed reaction is dUMP + (6R)-5,10-methylene-5,6,7,8-tetrahydrofolate = 7,8-dihydrofolate + dTMP. It participates in pyrimidine metabolism; dTTP biosynthesis. Catalyzes the reductive methylation of 2'-deoxyuridine-5'-monophosphate (dUMP) to 2'-deoxythymidine-5'-monophosphate (dTMP) while utilizing 5,10-methylenetetrahydrofolate (mTHF) as the methyl donor and reductant in the reaction, yielding dihydrofolate (DHF) as a by-product. This enzymatic reaction provides an intracellular de novo source of dTMP, an essential precursor for DNA biosynthesis. The sequence is that of Thymidylate synthase from Psychrobacter sp. (strain PRwf-1).